Here is a 398-residue protein sequence, read N- to C-terminus: Succinate--CoA ligase [ADP-forming] subunit beta (398 aa).

One can recognise an ATP-grasp domain in the interval Lys9–Glu254. ATP-binding positions include Lys46, Gly53–Gly55, Glu109, Ala112, and Glu117. Positions 209 and 223 each coordinate Mg(2+). Substrate contacts are provided by residues Asn274 and Gly331–Met333.

This sequence belongs to the succinate/malate CoA ligase beta subunit family. Heterotetramer of two alpha and two beta subunits. Mg(2+) is required as a cofactor.

The enzyme catalyses succinate + ATP + CoA = succinyl-CoA + ADP + phosphate. It catalyses the reaction GTP + succinate + CoA = succinyl-CoA + GDP + phosphate. It participates in carbohydrate metabolism; tricarboxylic acid cycle; succinate from succinyl-CoA (ligase route): step 1/1. Succinyl-CoA synthetase functions in the citric acid cycle (TCA), coupling the hydrolysis of succinyl-CoA to the synthesis of either ATP or GTP and thus represents the only step of substrate-level phosphorylation in the TCA. The beta subunit provides nucleotide specificity of the enzyme and binds the substrate succinate, while the binding sites for coenzyme A and phosphate are found in the alpha subunit. This chain is Succinate--CoA ligase [ADP-forming] subunit beta, found in Sinorhizobium medicae (strain WSM419) (Ensifer medicae).